A 313-amino-acid chain; its full sequence is Serine/threonine-protein phosphatase PP2A-3 catalytic subunit (313 aa).

Mn(2+) contacts are provided by Asp-61, His-63, Asp-89, and Asn-121. The active-site Proton donor is the His-122. Positions 171 and 245 each coordinate Mn(2+). Leu-313 bears the Leucine methyl ester mark.

Belongs to the PPP phosphatase family. PP-2A subfamily. PP2A consists of a common heterodimeric core enzyme, composed of a 36 kDa catalytic subunit (subunit C) and a 65 kDa constant regulatory subunit (subunit A), that associates with a variety of regulatory subunits such as subunits B (the R2/B/PR55/B55, R3/B''/PR72/PR130/PR59 and R5/B'/B56 families). Interacts with ACR4. Interacts with TAP46. Interacts with SIC/RON3. Mn(2+) is required as a cofactor. In terms of processing, reversibly methyl esterified on Leu-313 by leucine carboxyl methyltransferase 1 (LCMT1) and pectin methylesterase 1 (PME1). Carboxyl methylation influences the affinity of the catalytic subunit for the different regulatory subunits, thereby modulating the PP2A holoenzyme's substrate specificity, enzyme activity and cellular localization. Post-translationally, phosphorylation of either threonine (by autophosphorylation-activated protein kinase) or tyrosine results in inactivation of the phosphatase. Auto-dephosphorylation has been suggested as a mechanism for reactivation.

The protein resides in the cytoplasm. The enzyme catalyses O-phospho-L-seryl-[protein] + H2O = L-seryl-[protein] + phosphate. The catalysed reaction is O-phospho-L-threonyl-[protein] + H2O = L-threonyl-[protein] + phosphate. Its function is as follows. Functions redundantly with PP2A4, and is involved in establishing auxin gradients, apical-basal axis of polarity and root and shoot apical meristem during embryogenesis. May dephosphorylate PIN1 and regulate its subcellular distribution for polar auxin transport. Involved in the regulation of formative cell division in roots by dephosphorylating ACR4 protein kinase. The polypeptide is Serine/threonine-protein phosphatase PP2A-3 catalytic subunit (Arabidopsis thaliana (Mouse-ear cress)).